The following is a 383-amino-acid chain: Lipid-A-disaccharide synthase (383 aa).

Belongs to the LpxB family.

The catalysed reaction is a lipid X + a UDP-2-N,3-O-bis[(3R)-3-hydroxyacyl]-alpha-D-glucosamine = a lipid A disaccharide + UDP + H(+). It functions in the pathway bacterial outer membrane biogenesis; LPS lipid A biosynthesis. Its function is as follows. Condensation of UDP-2,3-diacylglucosamine and 2,3-diacylglucosamine-1-phosphate to form lipid A disaccharide, a precursor of lipid A, a phosphorylated glycolipid that anchors the lipopolysaccharide to the outer membrane of the cell. This Syntrophus aciditrophicus (strain SB) protein is Lipid-A-disaccharide synthase.